Reading from the N-terminus, the 231-residue chain is MSNTPIELKGSSFTLSVVHLHEAEPKVIHQALEDKIAQAPAFLKHAPVVLNVSALEDPVNWSAMHKAVSATGLRVIGVSGCKDAQLKAEIEKMGLPILTEGKEKAPRPAPAPQAPTQNTTPVTKTRLIDTPVRSGQRIYAPQCDLIVTSHVSAGAELIADGNIHVYGMMRGRALAGASGDRETQIFCTNLMAELVSIAGEYWLSDQIPAEFYGKAARLQLVENALTVQPLN.

The interval 102 to 125 is disordered; that stretch reads KEKAPRPAPAPQAPTQNTTPVTKT. A compositionally biased stretch (low complexity) spans 114–123; that stretch reads APTQNTTPVT.

The protein belongs to the MinC family. In terms of assembly, interacts with MinD and FtsZ.

Functionally, cell division inhibitor that blocks the formation of polar Z ring septums. Rapidly oscillates between the poles of the cell to destabilize FtsZ filaments that have formed before they mature into polar Z rings. Prevents FtsZ polymerization. This chain is Probable septum site-determining protein MinC, found in Escherichia coli O45:K1 (strain S88 / ExPEC).